We begin with the raw amino-acid sequence, 135 residues long: Small ribosomal subunit protein uS9 (135 aa).

Basic and acidic residues predominate over residues 108 to 118; that stretch reads VGDPRRTEPHK. The tract at residues 108-135 is disordered; it reads VGDPRRTEPHKPNRSTKGPRAKRQKSYR. Residues 119 to 135 are compositionally biased toward basic residues; it reads PNRSTKGPRAKRQKSYR.

The protein belongs to the universal ribosomal protein uS9 family.

This chain is Small ribosomal subunit protein uS9 (rps9), found in Pyrococcus horikoshii (strain ATCC 700860 / DSM 12428 / JCM 9974 / NBRC 100139 / OT-3).